The sequence spans 141 residues: HTH-type transcriptional repressor NsrR (141 aa).

The region spanning 2 to 129 (QLTSFTDYGL…DNYTLADLVE (128 aa)) is the HTH rrf2-type domain. The segment at residues 28–51 (ISEVTDVYGVSRNHMVKIINQLSR) is a DNA-binding region (H-T-H motif). The [2Fe-2S] cluster site is built by Cys-91, Cys-96, and Cys-102.

Requires [2Fe-2S] cluster as cofactor.

In terms of biological role, nitric oxide-sensitive repressor of genes involved in protecting the cell against nitrosative stress. May require iron for activity. The chain is HTH-type transcriptional repressor NsrR from Escherichia coli O157:H7 (strain EC4115 / EHEC).